The primary structure comprises 645 residues: Threonine--tRNA ligase (645 aa).

A TGS domain is found at 1–63 (MEQINIQFPD…ETDGSIGIVT (63 aa)). Residues 242 to 540 (DHRKIGKELE…LTEETKGAFP (299 aa)) form a catalytic region. Zn(2+)-binding residues include cysteine 336, histidine 387, and histidine 517.

The protein belongs to the class-II aminoacyl-tRNA synthetase family. As to quaternary structure, homodimer. Zn(2+) serves as cofactor.

The protein resides in the cytoplasm. The catalysed reaction is tRNA(Thr) + L-threonine + ATP = L-threonyl-tRNA(Thr) + AMP + diphosphate + H(+). In terms of biological role, catalyzes the attachment of threonine to tRNA(Thr) in a two-step reaction: L-threonine is first activated by ATP to form Thr-AMP and then transferred to the acceptor end of tRNA(Thr). Also edits incorrectly charged L-seryl-tRNA(Thr). This is Threonine--tRNA ligase from Staphylococcus aureus (strain Mu3 / ATCC 700698).